Reading from the N-terminus, the 244-residue chain is 23S rRNA (guanosine-2'-O-)-methyltransferase RlmB (244 aa).

Positions 196, 216, and 225 each coordinate S-adenosyl-L-methionine.

This sequence belongs to the class IV-like SAM-binding methyltransferase superfamily. RNA methyltransferase TrmH family. RlmB subfamily. As to quaternary structure, homodimer.

The protein resides in the cytoplasm. It carries out the reaction guanosine(2251) in 23S rRNA + S-adenosyl-L-methionine = 2'-O-methylguanosine(2251) in 23S rRNA + S-adenosyl-L-homocysteine + H(+). Specifically methylates the ribose of guanosine 2251 in 23S rRNA. This chain is 23S rRNA (guanosine-2'-O-)-methyltransferase RlmB, found in Pectobacterium atrosepticum (strain SCRI 1043 / ATCC BAA-672) (Erwinia carotovora subsp. atroseptica).